The sequence spans 345 residues: tRNA N6-adenosine threonylcarbamoyltransferase (345 aa).

Fe cation-binding residues include histidine 109 and histidine 113. Substrate-binding positions include 136–140 (TVSGG), aspartate 169, glycine 182, aspartate 186, and asparagine 284. Residue aspartate 312 participates in Fe cation binding.

This sequence belongs to the KAE1 / TsaD family. Fe(2+) is required as a cofactor.

The protein resides in the cytoplasm. The enzyme catalyses L-threonylcarbamoyladenylate + adenosine(37) in tRNA = N(6)-L-threonylcarbamoyladenosine(37) in tRNA + AMP + H(+). Its function is as follows. Required for the formation of a threonylcarbamoyl group on adenosine at position 37 (t(6)A37) in tRNAs that read codons beginning with adenine. Is involved in the transfer of the threonylcarbamoyl moiety of threonylcarbamoyl-AMP (TC-AMP) to the N6 group of A37, together with TsaE and TsaB. TsaD likely plays a direct catalytic role in this reaction. The chain is tRNA N6-adenosine threonylcarbamoyltransferase from Chlorobium phaeovibrioides (strain DSM 265 / 1930) (Prosthecochloris vibrioformis (strain DSM 265)).